The following is a 315-amino-acid chain: Prephenate dehydratase (315 aa).

Residues Arg-3 to Arg-190 form the Prephenate dehydratase domain. Residues Ser-204–Pro-281 enclose the ACT domain.

As to quaternary structure, homodimer.

The enzyme catalyses prephenate + H(+) = 3-phenylpyruvate + CO2 + H2O. The protein operates within amino-acid biosynthesis; L-phenylalanine biosynthesis; phenylpyruvate from prephenate: step 1/1. The polypeptide is Prephenate dehydratase (pheA) (Mycobacterium sp. (strain JLS)).